We begin with the raw amino-acid sequence, 227 residues long: Ureidoacrylate amidohydrolase RutB (227 aa).

Catalysis depends on D22, which acts as the Proton acceptor. K131 is a catalytic residue. Residue C164 is the Nucleophile of the active site.

The protein belongs to the isochorismatase family. RutB subfamily.

It catalyses the reaction (Z)-3-ureidoacrylate + H2O + H(+) = (Z)-3-aminoacrylate + NH4(+) + CO2. The enzyme catalyses (Z)-3-ureidoacrylate + H2O = (Z)-3-aminoacrylate + carbamate + H(+). It carries out the reaction (Z)-2-methylureidoacrylate + H2O + H(+) = (Z)-2-methylaminoacrylate + NH4(+) + CO2. Its function is as follows. Hydrolyzes ureidoacrylate to form aminoacrylate and carbamate. The carbamate hydrolyzes spontaneously, thereby releasing one of the nitrogen atoms of the pyrimidine ring as ammonia and one of its carbon atoms as CO2. In Azorhizobium caulinodans (strain ATCC 43989 / DSM 5975 / JCM 20966 / LMG 6465 / NBRC 14845 / NCIMB 13405 / ORS 571), this protein is Ureidoacrylate amidohydrolase RutB.